We begin with the raw amino-acid sequence, 258 residues long: Thiazole synthase (258 aa).

The Schiff-base intermediate with DXP role is filled by lysine 97. 1-deoxy-D-xylulose 5-phosphate-binding positions include glycine 158, 184–185 (AG), and 206–207 (NT).

Belongs to the ThiG family. Homotetramer. Forms heterodimers with either ThiH or ThiS.

The protein resides in the cytoplasm. The catalysed reaction is [ThiS sulfur-carrier protein]-C-terminal-Gly-aminoethanethioate + 2-iminoacetate + 1-deoxy-D-xylulose 5-phosphate = [ThiS sulfur-carrier protein]-C-terminal Gly-Gly + 2-[(2R,5Z)-2-carboxy-4-methylthiazol-5(2H)-ylidene]ethyl phosphate + 2 H2O + H(+). Its pathway is cofactor biosynthesis; thiamine diphosphate biosynthesis. Catalyzes the rearrangement of 1-deoxy-D-xylulose 5-phosphate (DXP) to produce the thiazole phosphate moiety of thiamine. Sulfur is provided by the thiocarboxylate moiety of the carrier protein ThiS. In vitro, sulfur can be provided by H(2)S. The protein is Thiazole synthase of Marinomonas sp. (strain MWYL1).